A 945-amino-acid chain; its full sequence is MTEHVQPANPSDATPQHRYTAELAGQIEQRWQDRWSEEGTFNAPNPVGPLAGDVPADKLFVQDMFPYPSGTGLHVGHPLGYIATDVFARYHRMQGHNVLHTLGYDAFGLPAEQYAVQTGTHPRTTTEANIVNMKRQLRRLGLGHDERRTFATTDTDFYHWTQWIFLQIHDAWFDKEAGKARRISELEAEFVSGARSLEDGREWASLSVSEKEAVLDSYRLVYHSDSMVNWCPGLGTVLANEEVTADGRSDRGNFPVFRKHLQQWMMRITAYSDRLVDDLEYLDWPEKVKTMQRNWIGRSHGAQVKFQADGHEIEVFTTRPDTLFGATYVTLAPEHELVDDIVAAEWPRGVDSRWTGGAATPAEAVAAYRKSIAAKSDLERQEYKEKTGVFLGTYAVNPVNGHKLPVFIADYVLTGYGTGAIMAVPGHDHRDYEFATEFGLDIVEVISGGDLTKDAYTGDGTIVNSDFLNGMSVADAKKAITERLEADGTGKGTIQYKLRDWLFARQRYWGEPFPIVYDAEGNAHALPESSLPVELPEVEDYAPVSFDPDDASSEPSPPLAKAVDWVNVELDLGDGLQTYRRDTNVMPQWAGSSWYQLRYIDPTNPDVFCDKENERYWTGPRPEIHGPNDPGGVDLYVGGVEHAVLHLLYSRFWHKVLFDLGYVSSSEPYRRLYNQGYIQAYAYTDARGVYVPADEVEEKDGKFFHQGVEVNREYGKMGKSLKNSVSPDEICEEYGADTLRVYEMSMGPLDTSRPWATKDVVGAQRFLQRAWRVVVDEESGALRVTDDAPAEDTLRALNKAIAGVSEDYTALRDNTAAAKLIEYTNHLTKAYPGGAPRSVVEPLVLMLAPLAPHLAEELWSRLGHEKSLAHGPFPVAEEKWLVEDTVEYPIQVNGKVRSRVTVAADAPREEIEKIALADDKIVALLDGQDPRKVIVVPGKMVNIVR.

A 'HIGH' region motif is present at residues 66 to 77 (PYPSGTGLHVGH). Positions 716–720 (KMGKS) match the 'KMSKS' region motif. Lysine 719 contacts ATP.

The protein belongs to the class-I aminoacyl-tRNA synthetase family.

It localises to the cytoplasm. It catalyses the reaction tRNA(Leu) + L-leucine + ATP = L-leucyl-tRNA(Leu) + AMP + diphosphate. This Rhodococcus jostii (strain RHA1) protein is Leucine--tRNA ligase.